Reading from the N-terminus, the 375-residue chain is DNA replication and repair protein RecF (375 aa).

Residue 30–37 (GKNAQGKT) participates in ATP binding.

This sequence belongs to the RecF family.

It is found in the cytoplasm. In terms of biological role, the RecF protein is involved in DNA metabolism; it is required for DNA replication and normal SOS inducibility. RecF binds preferentially to single-stranded, linear DNA. It also seems to bind ATP. The protein is DNA replication and repair protein RecF of Lactobacillus acidophilus (strain ATCC 700396 / NCK56 / N2 / NCFM).